Here is a 223-residue protein sequence, read N- to C-terminus: RNA-free ribonuclease P (223 aa).

It belongs to the HARP family.

The catalysed reaction is Endonucleolytic cleavage of RNA, removing 5'-extranucleotides from tRNA precursor.. Functionally, RNA-free RNase P that catalyzes the removal of the 5'-leader sequence from pre-tRNA to produce the mature 5'-terminus. The chain is RNA-free ribonuclease P from Methanococcus vannielii (strain ATCC 35089 / DSM 1224 / JCM 13029 / OCM 148 / SB).